Here is a 232-residue protein sequence, read N- to C-terminus: MDAVAAEPVSSSTAGLPAQLRDLGQQNYAPVWRAMQRFTDARGEHTADEVWVVEHAPVFTLGQAGKPEHVLAPGEIPVLQVDRGGQVTYHGPGQLVVYPLLDLRRLKIGVRDYVCKIEQALIDTLEEWNIVAERRDGAPGVYVGGAKIAALGIRVRRGCTFHGLSFNVAMDLEPFHRINPCGYQGLQVTSVLDLGGPSGMDAVKAVLLDQLARQFGLVLQPTSALPDLSLPA.

The 176-residue stretch at 44-219 folds into the BPL/LPL catalytic domain; it reads EHTADEVWVV…QLARQFGLVL (176 aa). Residues 83–90, 150–152, and 163–165 contribute to the substrate site; these read RGGQVTYH, ALG, and GLS. Cys-181 functions as the Acyl-thioester intermediate in the catalytic mechanism.

Belongs to the LipB family.

The protein resides in the cytoplasm. The catalysed reaction is octanoyl-[ACP] + L-lysyl-[protein] = N(6)-octanoyl-L-lysyl-[protein] + holo-[ACP] + H(+). It participates in protein modification; protein lipoylation via endogenous pathway; protein N(6)-(lipoyl)lysine from octanoyl-[acyl-carrier-protein]: step 1/2. Its function is as follows. Catalyzes the transfer of endogenously produced octanoic acid from octanoyl-acyl-carrier-protein onto the lipoyl domains of lipoate-dependent enzymes. Lipoyl-ACP can also act as a substrate although octanoyl-ACP is likely to be the physiological substrate. The sequence is that of Octanoyltransferase from Xanthomonas euvesicatoria pv. vesicatoria (strain 85-10) (Xanthomonas campestris pv. vesicatoria).